Reading from the N-terminus, the 465-residue chain is Cysteine--tRNA ligase (465 aa).

Cys27 serves as a coordination point for Zn(2+). The 'HIGH' region signature appears at 29–39 (PTVYDFIHIGN). Residues Cys207, His232, and Glu236 each contribute to the Zn(2+) site. Residues 264–268 (KMSKS) carry the 'KMSKS' region motif. ATP is bound at residue Lys267.

It belongs to the class-I aminoacyl-tRNA synthetase family. In terms of assembly, monomer. The cofactor is Zn(2+).

It localises to the cytoplasm. It catalyses the reaction tRNA(Cys) + L-cysteine + ATP = L-cysteinyl-tRNA(Cys) + AMP + diphosphate. The polypeptide is Cysteine--tRNA ligase (Caldicellulosiruptor saccharolyticus (strain ATCC 43494 / DSM 8903 / Tp8T 6331)).